The chain runs to 304 residues: N-acetyl-D-glucosamine kinase (304 aa).

ATP-binding positions include Gly-4 to Lys-11 and Gly-133 to Ile-140. 4 residues coordinate Zn(2+): His-157, Cys-177, Cys-179, and Cys-184.

Belongs to the ROK (NagC/XylR) family. NagK subfamily.

It catalyses the reaction N-acetyl-D-glucosamine + ATP = N-acetyl-D-glucosamine 6-phosphate + ADP + H(+). The protein operates within cell wall biogenesis; peptidoglycan recycling. In terms of biological role, catalyzes the phosphorylation of N-acetyl-D-glucosamine (GlcNAc) derived from cell-wall degradation, yielding GlcNAc-6-P. The chain is N-acetyl-D-glucosamine kinase from Pectobacterium atrosepticum (strain SCRI 1043 / ATCC BAA-672) (Erwinia carotovora subsp. atroseptica).